The following is a 160-amino-acid chain: MRIWIDADACPKVAKELVCKFALKRKLEVWMVAGQPQVKPPFACVHLVVVESGMDAADDYLVEQAEPGDLAICSDVPLADRLIKKQVAALDPRGREFDARNMGDKLAMRNLMADLRDQGQMGGGQAPYGERDRQAFANALDRLLTRLQREADLRASQPHR.

This sequence belongs to the UPF0178 family.

This chain is UPF0178 protein PLES_56411, found in Pseudomonas aeruginosa (strain LESB58).